The following is a 180-amino-acid chain: NADH-quinone oxidoreductase subunit I (180 aa).

2 4Fe-4S ferredoxin-type domains span residues 50–80 (LTRD…LQKA) and 90–119 (EFFR…LTPD). [4Fe-4S] cluster is bound by residues C60, C63, C66, C70, C99, C102, C105, and C109.

The protein belongs to the complex I 23 kDa subunit family. As to quaternary structure, NDH-1 is composed of 13 different subunits. Subunits NuoA, H, J, K, L, M, N constitute the membrane sector of the complex. The cofactor is [4Fe-4S] cluster.

It localises to the cell inner membrane. The catalysed reaction is a quinone + NADH + 5 H(+)(in) = a quinol + NAD(+) + 4 H(+)(out). NDH-1 shuttles electrons from NADH, via FMN and iron-sulfur (Fe-S) centers, to quinones in the respiratory chain. The immediate electron acceptor for the enzyme in this species is believed to be ubiquinone. Couples the redox reaction to proton translocation (for every two electrons transferred, four hydrogen ions are translocated across the cytoplasmic membrane), and thus conserves the redox energy in a proton gradient. In Yersinia pseudotuberculosis serotype O:1b (strain IP 31758), this protein is NADH-quinone oxidoreductase subunit I.